Reading from the N-terminus, the 214-residue chain is Large ribosomal subunit protein uL3 (214 aa).

The tract at residues 133 to 154 (GLGAGHGTQRKHRSPGSIGGCA) is disordered.

It belongs to the universal ribosomal protein uL3 family. Part of the 50S ribosomal subunit. Forms a cluster with proteins L14 and L19.

Functionally, one of the primary rRNA binding proteins, it binds directly near the 3'-end of the 23S rRNA, where it nucleates assembly of the 50S subunit. The sequence is that of Large ribosomal subunit protein uL3 from Streptomyces avermitilis (strain ATCC 31267 / DSM 46492 / JCM 5070 / NBRC 14893 / NCIMB 12804 / NRRL 8165 / MA-4680).